Here is a 383-residue protein sequence, read N- to C-terminus: Probable L-aspartate decarboxylase (383 aa).

Lysine 231 is subject to N6-(pyridoxal phosphate)lysine.

The protein belongs to the group II decarboxylase family. MfnA subfamily. The cofactor is pyridoxal 5'-phosphate.

It catalyses the reaction L-aspartate + H(+) = beta-alanine + CO2. Its pathway is cofactor biosynthesis; coenzyme A biosynthesis. Its function is as follows. Catalyzes the decarboxylation of L-aspartate to produce beta-alanine. The sequence is that of Probable L-aspartate decarboxylase from Thermococcus gammatolerans (strain DSM 15229 / JCM 11827 / EJ3).